Reading from the N-terminus, the 90-residue chain is Phenol 2-monooxygenase, stimulatory component DmpM (90 aa).

The protein belongs to the TmoD/XamoD family. Active as a monomer. Formation of dimers inactivates the protein. The multicomponent enzyme phenol hydroxylase is formed by DmpL (P1 component), DmpM (P2 component), DmpN (P3 component), DmpO (P4 component) and DmpP (P5 component).

It carries out the reaction phenol + NADH + O2 + H(+) = catechol + NAD(+) + H2O. The protein operates within aromatic compound metabolism; phenol degradation. In terms of biological role, part of a multicomponent enzyme which catalyzes the degradation of phenol and some of its methylated derivatives. DmpM is a regulatory subunit that stimulates the phenol hydroxylase activity of the complex. The steady-state rate of phenol hydroxylase turnover is dependent on the DmpM concentration, with a maximum observed rate at about 1.5 DmpM per oxygenase monomer. Higher concentrations of DmpM inhibit phenol hydroxylase activity. May act by altering the redox potential of the oxygenase. Required for growth on phenol and for in vitro phenol hydroxylase activity. The chain is Phenol 2-monooxygenase, stimulatory component DmpM from Pseudomonas sp. (strain CF600).